The primary structure comprises 306 residues: Glycine--tRNA ligase alpha subunit (306 aa).

It belongs to the class-II aminoacyl-tRNA synthetase family. Tetramer of two alpha and two beta subunits.

The protein localises to the cytoplasm. It carries out the reaction tRNA(Gly) + glycine + ATP = glycyl-tRNA(Gly) + AMP + diphosphate. This chain is Glycine--tRNA ligase alpha subunit, found in Aliivibrio fischeri (strain ATCC 700601 / ES114) (Vibrio fischeri).